A 226-amino-acid chain; its full sequence is Adenosine 5'-phosphosulfate reductase (226 aa).

[4Fe-4S] cluster contacts are provided by Cys-112, Cys-113, Cys-195, and Cys-198. The Nucleophile; cysteine thiosulfonate intermediate role is filled by Cys-221.

This sequence belongs to the PAPS reductase family. CysH subfamily. [4Fe-4S] cluster is required as a cofactor.

The protein localises to the cytoplasm. The catalysed reaction is [thioredoxin]-disulfide + sulfite + AMP + 2 H(+) = adenosine 5'-phosphosulfate + [thioredoxin]-dithiol. The protein operates within sulfur metabolism; hydrogen sulfide biosynthesis; sulfite from sulfate. Functionally, catalyzes the formation of sulfite from adenosine 5'-phosphosulfate (APS) using thioredoxin as an electron donor. This chain is Adenosine 5'-phosphosulfate reductase, found in Bacillus anthracis (strain A0248).